Here is a 905-residue protein sequence, read N- to C-terminus: DNA mismatch repair protein MutS (905 aa).

The disordered stretch occupies residues 388 to 410; it reads LERPANPEGTYPTDAETSGDTLP. 638–645 contacts ATP; that stretch reads GPNMAGKS. Residues 826–847 are disordered; the sequence is RDAARGTNSAPSRQTLPGLDLP. Residues 831–840 show a composition bias toward polar residues; that stretch reads GTNSAPSRQT.

This sequence belongs to the DNA mismatch repair MutS family.

Functionally, this protein is involved in the repair of mismatches in DNA. It is possible that it carries out the mismatch recognition step. This protein has a weak ATPase activity. The protein is DNA mismatch repair protein MutS of Nitratidesulfovibrio vulgaris (strain DP4) (Desulfovibrio vulgaris).